Here is a 323-residue protein sequence, read N- to C-terminus: Rhazimal reductase 2 (323 aa).

Asp53 serves as a coordination point for NADP(+). The active-site Proton donor is Tyr58. Residues 167 to 168 (SN), Gln189, 215 to 220 (WSPLLS), and 289 to 297 (DQIQQIPQR) contribute to the NADP(+) site.

Belongs to the aldo/keto reductase family. In terms of assembly, monomer.

The catalysed reaction is rhazimol + NADP(+) = rhazimal + NADPH + 2 H(+). It participates in alkaloid biosynthesis. In terms of biological role, oxidoreductase involved in the biosynthesis of akuammilan monoterpene indole alkaloids (MIAs) natural products, components with various biological properties such as antidiabetic, antibacterial, anti-inflammatory, anticancer, and antimalarial activities. Catalyzes the conversion of rhazimal to rhazimol. The protein is Rhazimal reductase 2 of Alstonia scholaris (Dogbane).